Consider the following 249-residue polypeptide: Elongator complex protein 6 homolog (249 aa).

It belongs to the ELP6 family. In terms of assembly, component of the elongator complex.

Its subcellular location is the cytoplasm. It is found in the nucleus. The protein operates within tRNA modification; 5-methoxycarbonylmethyl-2-thiouridine-tRNA biosynthesis. Its function is as follows. Component of the elongator complex which is required for multiple tRNA modifications, including mcm5U (5-methoxycarbonylmethyl uridine), mcm5s2U (5-methoxycarbonylmethyl-2-thiouridine), and ncm5U (5-carbamoylmethyl uridine). The elongator complex catalyzes formation of carboxymethyluridine in the wobble base at position 34 in tRNAs. This is Elongator complex protein 6 homolog from Schizosaccharomyces pombe (strain 972 / ATCC 24843) (Fission yeast).